Consider the following 140-residue polypeptide: Small ribosomal subunit protein uS12 (140 aa).

2 disordered regions span residues 1 to 20 (MPTINQLVRKGRKSKVVKSD) and 35 to 55 (QTNVSSPQKRGVCTRVGTMTP). D102 bears the 3-methylthioaspartic acid mark. Residues 121-140 (DGRMQGRSKYGTKRPKAAKK) are disordered. The segment covering 130–140 (YGTKRPKAAKK) has biased composition (basic residues).

Belongs to the universal ribosomal protein uS12 family. Part of the 30S ribosomal subunit. Contacts proteins S8 and S17. May interact with IF1 in the 30S initiation complex.

In terms of biological role, with S4 and S5 plays an important role in translational accuracy. Its function is as follows. Interacts with and stabilizes bases of the 16S rRNA that are involved in tRNA selection in the A site and with the mRNA backbone. Located at the interface of the 30S and 50S subunits, it traverses the body of the 30S subunit contacting proteins on the other side and probably holding the rRNA structure together. The combined cluster of proteins S8, S12 and S17 appears to hold together the shoulder and platform of the 30S subunit. The chain is Small ribosomal subunit protein uS12 from Exiguobacterium sp. (strain ATCC BAA-1283 / AT1b).